The sequence spans 494 residues: Glucose-6-phosphate 1-dehydrogenase (494 aa).

NADP(+)-binding residues include R46 and K150. The substrate site is built by H180, K184, E218, and D237. H242 functions as the Proton acceptor in the catalytic mechanism. Residue K342 participates in substrate binding.

This sequence belongs to the glucose-6-phosphate dehydrogenase family.

It catalyses the reaction D-glucose 6-phosphate + NADP(+) = 6-phospho-D-glucono-1,5-lactone + NADPH + H(+). It functions in the pathway carbohydrate degradation; pentose phosphate pathway; D-ribulose 5-phosphate from D-glucose 6-phosphate (oxidative stage): step 1/3. Functionally, catalyzes the oxidation of glucose 6-phosphate to 6-phosphogluconolactone. In Aggregatibacter actinomycetemcomitans (Actinobacillus actinomycetemcomitans), this protein is Glucose-6-phosphate 1-dehydrogenase.